The sequence spans 383 residues: tRNA(Met) cytidine acetate ligase (383 aa).

Residues 7 to 20, glycine 101, asparagine 153, and 178 to 179 each bind ATP; these read IAEF…HEFL and RI.

This sequence belongs to the TmcAL family.

The protein resides in the cytoplasm. It carries out the reaction cytidine(34) in elongator tRNA(Met) + acetate + ATP = N(4)-acetylcytidine(34) in elongator tRNA(Met) + AMP + diphosphate. Functionally, catalyzes the formation of N(4)-acetylcytidine (ac(4)C) at the wobble position of elongator tRNA(Met), using acetate and ATP as substrates. First activates an acetate ion to form acetyladenylate (Ac-AMP) and then transfers the acetyl group to tRNA to form ac(4)C34. The polypeptide is tRNA(Met) cytidine acetate ligase (Lactobacillus helveticus (strain DPC 4571)).